The sequence spans 399 residues: S-adenosylmethionine synthase (399 aa).

An ATP-binding site is contributed by His17. Asp19 provides a ligand contact to Mg(2+). A K(+)-binding site is contributed by Glu45. Glu58 and Gln101 together coordinate L-methionine. Residues Gln101–Gln111 are flexible loop. ATP-binding positions include Asp177 to Lys179, Arg244 to Phe245, Asp253, Arg259 to Lys260, Ala276, and Lys280. Position 253 (Asp253) interacts with L-methionine. Lys284 serves as a coordination point for L-methionine.

This sequence belongs to the AdoMet synthase family. Homotetramer; dimer of dimers. Mg(2+) is required as a cofactor. K(+) serves as cofactor.

The protein resides in the cytoplasm. It carries out the reaction L-methionine + ATP + H2O = S-adenosyl-L-methionine + phosphate + diphosphate. The protein operates within amino-acid biosynthesis; S-adenosyl-L-methionine biosynthesis; S-adenosyl-L-methionine from L-methionine: step 1/1. In terms of biological role, catalyzes the formation of S-adenosylmethionine (AdoMet) from methionine and ATP. The overall synthetic reaction is composed of two sequential steps, AdoMet formation and the subsequent tripolyphosphate hydrolysis which occurs prior to release of AdoMet from the enzyme. This Bacillus thuringiensis (strain Al Hakam) protein is S-adenosylmethionine synthase.